We begin with the raw amino-acid sequence, 137 residues long: Large ribosomal subunit protein uL16 (137 aa).

Belongs to the universal ribosomal protein uL16 family. Part of the 50S ribosomal subunit.

Binds 23S rRNA and is also seen to make contacts with the A and possibly P site tRNAs. The polypeptide is Large ribosomal subunit protein uL16 (Wolbachia pipientis wMel).